The following is an 866-amino-acid chain: Primer-independent DNA polymerase PolB (866 aa).

The tract at residues 50–286 (SDLTLHIGFD…DRVPATIGAM (237 aa)) is exonuclease domain. A palm1 domain region spans residues 287 to 385 (AVSRFTKTLK…GLLDILTPDY (99 aa)). The interval 386-481 (GNIRLSKNPD…NSESTSVFLP (96 aa)) is TPR1 domain. Residues 482–522 (FVQQVRENRNRHIKGSLEEKFWKEIGNSLYGKLAQGLRAKT) form a fingers domain region. The TPR2 domain stretch occupies residues 523–549 (AFDTARGLNRSLPPSSVTQPFFAAHVT). Positions 550 to 678 (GFIRAVVGEL…PGQTLSRSTL (129 aa)) are palm2 domain. The tract at residues 679 to 866 (ISTREMWLSE…RKYPTFCLPV (188 aa)) is thumb domain.

The cofactor is Mn(2+).

The catalysed reaction is DNA(n) + a 2'-deoxyribonucleoside 5'-triphosphate = DNA(n+1) + diphosphate. Functionally, DNA polymerase with primer-independent templated DNA polymerization activity, primer-dependent DNA polymerization activity with strand displacement, translesion synthesis activity across non-bulky base damage, 3'-5' exodeoxyribonuclease activity, and de novo primer synthesis activity. The enzyme is processive and faithful. Translation synthesis across abasic sites is coupled to de novo primer synthesis. Overexpression of wild-type protein increases survival of cells upon mitomycin C or UV treatment. The sequence is that of Primer-independent DNA polymerase PolB (pi-polB) from Escherichia coli.